Consider the following 167-residue polypeptide: MTRPTHPNALIWLLLSIAIIALDQATKAWVLTSLPEYIPVPVIHGFWNWYRSYNTGAAFSFLSDAGGWQMWLFIALALGISGLLTFWLSRTPRREWRSALPYALIIGGGIGNVIDRFLHGHVVDFIQWYVGSYYWPSFNLADSAIVAGAIGIGLLSLFDSKHSPKTP.

Transmembrane regions (helical) follow at residues 10–30 (LIWLLLSIAIIALDQATKAWV), 68–88 (WQMWLFIALALGISGLLTFWL), and 98–118 (SALPYALIIGGGIGNVIDRFL). Catalysis depends on residues D124 and D142. Residues 138–158 (FNLADSAIVAGAIGIGLLSLF) traverse the membrane as a helical segment.

This sequence belongs to the peptidase A8 family.

The protein resides in the cell inner membrane. The enzyme catalyses Release of signal peptides from bacterial membrane prolipoproteins. Hydrolyzes -Xaa-Yaa-Zaa-|-(S,diacylglyceryl)Cys-, in which Xaa is hydrophobic (preferably Leu), and Yaa (Ala or Ser) and Zaa (Gly or Ala) have small, neutral side chains.. The protein operates within protein modification; lipoprotein biosynthesis (signal peptide cleavage). This protein specifically catalyzes the removal of signal peptides from prolipoproteins. This chain is Lipoprotein signal peptidase, found in Xylella fastidiosa (strain M23).